We begin with the raw amino-acid sequence, 251 residues long: Small ribosomal subunit protein uS2 (251 aa).

Belongs to the universal ribosomal protein uS2 family.

The polypeptide is Small ribosomal subunit protein uS2 (Deinococcus deserti (strain DSM 17065 / CIP 109153 / LMG 22923 / VCD115)).